A 376-amino-acid chain; its full sequence is 23S rRNA (uracil(747)-C(5))-methyltransferase RlmC (376 aa).

Residues C3, C11, C14, and C87 each contribute to the [4Fe-4S] cluster site. S-adenosyl-L-methionine is bound by residues Q212, F241, E262, and N307. C334 acts as the Nucleophile in catalysis.

Belongs to the class I-like SAM-binding methyltransferase superfamily. RNA M5U methyltransferase family. RlmC subfamily.

It catalyses the reaction uridine(747) in 23S rRNA + S-adenosyl-L-methionine = 5-methyluridine(747) in 23S rRNA + S-adenosyl-L-homocysteine + H(+). Its function is as follows. Catalyzes the formation of 5-methyl-uridine at position 747 (m5U747) in 23S rRNA. The chain is 23S rRNA (uracil(747)-C(5))-methyltransferase RlmC from Salmonella choleraesuis (strain SC-B67).